Consider the following 406-residue polypeptide: Endoplasmic reticulum resident protein 44 (406 aa).

A signal peptide spans 1–29 (MHPAVFLSLPDLRCSLLLLVTWVFTPVTT). The Thioredoxin domain occupies 30–138 (EITSLDTENI…VKALADYIRQ (109 aa)). 2 disulfides stabilise this stretch: cysteine 189/cysteine 241 and cysteine 301/cysteine 318. The interval 236-285 (WIQDKCVPLVREITFENGEELTEEGLPFLILFHMKEDTESLEIFQNEVAR) is interaction with ITPR1. Residues 360 to 387 (FHHGPDPTDTAPGEQAQDVASSPPESSF) are disordered. Positions 377–387 (DVASSPPESSF) are enriched in polar residues. Residues 403-406 (RDEL) carry the Prevents secretion from ER motif.

In terms of assembly, forms mixed disulfides with both ERO1A and ERO1B and cargo folding intermediates; the interactions with ERO1A and ERO1B result in their retention in the endoplasmic reticulum. Directly interacts with ITPR1 in a pH-, redox state- and calcium-dependent manner, but not with ITPR2 or ITPR3. The strength of this interaction inversely correlates with calcium concentration.

Its subcellular location is the endoplasmic reticulum lumen. In terms of biological role, mediates thiol-dependent retention in the early secretory pathway, forming mixed disulfides with substrate proteins through its conserved CRFS motif. Inhibits the calcium channel activity of ITPR1. May have a role in the control of oxidative protein folding in the endoplasmic reticulum. Required to retain ERO1A and ERO1B in the endoplasmic reticulum. The protein is Endoplasmic reticulum resident protein 44 (ERP44) of Homo sapiens (Human).